The following is a 190-amino-acid chain: Zinc finger C2H2 protein ECU03_0790 (190 aa).

C2H2-type zinc fingers lie at residues 4–27 (RCCFEGCGKSFPRRAKLSDHLNTH), 33–55 (YKCDMCEKSYMKNGHLSVHKKKH), 85–108 (YKCGICGKRYRKRSWFDVHVESHH), and 119–142 (HVCEYCKFEFNKKSNLSTHVRSVH).

The polypeptide is Zinc finger C2H2 protein ECU03_0790 (Encephalitozoon cuniculi (strain GB-M1) (Microsporidian parasite)).